Reading from the N-terminus, the 409-residue chain is MKTDGGNTWRASHSKPLNTANTMGEPFSHSEYSVHADQSEFYLNELTEHSGQDNPCMNTSRLNTNRYGHPVVHPCPKIHCICTQSNIAAIGSDCTGCVDIAQACKMLRGGQGCTQDPCVKNPHTQCFTDVSNHAMRNVLPLNVSNTEQFPIQIEYANGRNPVLNPMDDLAMRAALLLSKDIDLQNTHILPSTRISIEKNIPVAAGLAGGSADAAAVLLGINSAWQTNYSRCDLLGKAGALGADVPFLIWGGAAYGSGTGSCVTFFETQTLYWVLCFSKHPLSTRKVFQELDRQRSGAGCNHHPVFSNPAECAEMLKKAIKRGPEALAALLHNDLTSAAKMLMPEIAERIKAAERCPGILRAIISGSGPTLALLAEDAEAANRACSILKDTGVICKAVSSPAYSSIYWQT.

Residues Met1–Thr22 show a composition bias toward polar residues. Positions Met1–Pro26 are disordered. Residue Pro201–Ala211 coordinates ATP. Asp243 is a catalytic residue.

This sequence belongs to the GHMP kinase family. IspE subfamily.

It catalyses the reaction 4-CDP-2-C-methyl-D-erythritol + ATP = 4-CDP-2-C-methyl-D-erythritol 2-phosphate + ADP + H(+). It participates in isoprenoid biosynthesis; isopentenyl diphosphate biosynthesis via DXP pathway; isopentenyl diphosphate from 1-deoxy-D-xylulose 5-phosphate: step 3/6. Its function is as follows. Catalyzes the phosphorylation of the position 2 hydroxy group of 4-diphosphocytidyl-2C-methyl-D-erythritol. In Tropheryma whipplei (strain TW08/27) (Whipple's bacillus), this protein is 4-diphosphocytidyl-2-C-methyl-D-erythritol kinase (ispE).